A 156-amino-acid chain; its full sequence is Endogenous retrovirus group K member 9 Pro protein (156 aa).

The 76-residue stretch at 21–96 (FEGLVDTGAD…IPLNLWGRDL (76 aa)) folds into the Peptidase A2 domain. Asp26 is an active-site residue. The region spanning 111–156 (YSPTSQKIMTKRGYIPGKGLGKNEDGIKIPFEAKINQKREGIGYPF) is the G-patch domain.

The protein belongs to the peptidase A2 family. HERV class-II K(HML-2) subfamily. As to quaternary structure, active as a homodimer. Post-translationally, autoproteolytically processed at the N-terminus. Expected C-terminal autoprocessing not detected. The sequence shown is that of the processed Pro protein.

It catalyses the reaction Processing at the authentic HIV-1 PR recognition site and release of the mature p17 matrix and the p24 capsid protein, as a result of the cleavage of the -SQNY-|-PIVQ- cleavage site.. Its function is as follows. Retroviral proteases have roles in the processing of the primary translation products and the maturation of the viral particle. Endogenous Pro proteins may have kept, lost or modified their original function during evolution. The polypeptide is Endogenous retrovirus group K member 9 Pro protein (ERVK-9) (Homo sapiens (Human)).